Reading from the N-terminus, the 491-residue chain is Monocarboxylate transport permease protein (491 aa).

A run of 13 helical transmembrane segments spans residues 7–27 (GTALAVFIFFFVLVTVMGFVA), 55–75 (WFLVGGDFYTAYTVIAVPALV), 83–103 (FFALPYTIVVYPFVFMVMPVL), 130–150 (LAVAATGVIATMPYIALQLVG), 157–177 (ALGLHGELPLAIAFIVLALYT), 187–207 (LIAFVKDIMIYIVVIAAVALI), 246–266 (LALGSALAAFMYPHTLTGIFA), 277–297 (AIMLPAYTLLLGLLALLGYMG), 322–342 (WFSGFAFAAIAIGALVPAAVM), 374–396 (ITSLVVKVGALLVIIFLPTQFAL), 400–422 (LLGGIWILQTLPALVFGLYTNWF), 427–447 (LLAGWFVGFGGGTFLVWDAGW), and 465–485 (GLLALAANIAVAVVVNALLPA).

The protein belongs to the sodium:solute symporter (SSF) (TC 2.A.21) family.

Its subcellular location is the cell membrane. Its activity is regulated as follows. Inhibited by CCCP, but is apparently not affected by the concentration of sodium. Functionally, low-affinity transporter of alanine and high-affinity transporter of lactate and pyruvate. Can also transport other monocarboxylates such as propionate, butyrate, alpha-hydroxybutyrate or acetate. May be proton coupled. Required for optimal growth on alanine or pyruvate and ammonia. The chain is Monocarboxylate transport permease protein from Rhizobium johnstonii (strain DSM 114642 / LMG 32736 / 3841) (Rhizobium leguminosarum bv. viciae).